The following is a 348-amino-acid chain: Propane 2-monooxygenase, reductase component (348 aa).

Residues 5–95 (HKINFDPVDI…DCTIELLNFD (91 aa)) form the 2Fe-2S ferredoxin-type domain. [2Fe-2S] cluster is bound by residues Cys39, Cys44, Cys47, and Cys79. Residues 105-206 (IQDVRTQVQA…TGPYGSFTLK (102 aa)) enclose the FAD-binding FR-type domain.

This sequence belongs to the bacterial ring-hydroxylating dioxygenase ferredoxin reductase family. As to quaternary structure, the propane 2-monooxygenase multicomponent enzyme system is composed of an electron transfer component and a monooxygenase component interacting with the effector protein MimD. The electron transfer component is composed of a reductase (MimB), and the monooxygenase component is formed by a large subunit (MimA) and a small subunit (MimC). The cofactor is FAD. [2Fe-2S] cluster serves as cofactor.

Functionally, reductase component of the propane 2-monooxygenase multicomponent enzyme system which is involved in the degradation of propane via the O2-dependent hydroxylation of propane. Reductase catalyzes the transfer of electrons from NADH or NADPH to monooxygenase. This is Propane 2-monooxygenase, reductase component from Mycolicibacterium smegmatis (strain ATCC 700084 / mc(2)155) (Mycobacterium smegmatis).